The primary structure comprises 631 residues: PTS system glucosamine-specific EIICBA component (631 aa).

In terms of domain architecture, PTS EIIC type-1 spans 3-382; the sequence is KKAFQILQQL…WNLKTPGRET (380 aa). Transmembrane regions (helical) follow at residues 12-32, 56-76, 106-126, 149-169, 196-216, 243-263, 298-318, and 350-370; these read LGRA…LLRF, LIFA…AGLA, HLID…AYLY, IITS…WPLI, LLIP…MMGE, FMMG…LAII, FLFV…VIFV, and VVIP…RFAI. The PTS EIIB type-1 domain occupies 397–478; it reads DQLAFHVLQA…KTIMAGGVPA (82 aa). The Phosphocysteine intermediate; for EIIB activity role is filled by C419. C419 carries the post-translational modification Phosphocysteine. One can recognise a PTS EIIA type-1 domain in the interval 515 to 619; sequence DQVFSEKMMG…SAITPVIFTN (105 aa). H567 serves as the catalytic Tele-phosphohistidine intermediate; for EIIA activity. H567 carries the post-translational modification Phosphohistidine.

It is found in the cell membrane. It carries out the reaction D-glucosamine(out) + N(pros)-phospho-L-histidyl-[protein] = D-glucosamine 6-phosphate(in) + L-histidyl-[protein]. In terms of biological role, the phosphoenolpyruvate-dependent sugar phosphotransferase system (sugar PTS), a major carbohydrate active transport system, catalyzes the phosphorylation of incoming sugar substrates concomitantly with their translocation across the cell membrane. This system is involved in glucosamine transport. In vitro, when expressed in the absence of GamR and NagP, can transport N-acetylglucosamine. In addition, plays an important role in the phosphorylation of EIIA-deficient PTS transporters. The EIIA domain can transfer a phosphoryl group to EIIA-deficient PTS transporters, enabling growth with maltose, N-acetylglucosamine, sucrose or trehalose as the sole carbon source. The polypeptide is PTS system glucosamine-specific EIICBA component (Bacillus subtilis (strain 168)).